A 58-amino-acid chain; its full sequence is MVAVQGTEDPFYYDYETVRNGGLIFAALAFIVGLVIILSKRFRCGAKRQHRQIPEDGL.

Residues N20–S39 traverse the membrane as a helical segment.

The protein belongs to the FXYD family. Regulatory subunit of the sodium/potassium-transporting ATPase which is composed of a catalytic alpha subunit, an auxiliary non-catalytic beta subunit and an additional regulatory subunit. In terms of tissue distribution, highest levels expressed in the kidney and spleen. Restricted to the basolateral membrane in renal epithelial cells and varies in its level of expression along the nephron.

It localises to the membrane. Functionally, may be involved in forming the receptor site for cardiac glycoside binding or may modulate the transport function of the sodium ATPase. The protein is Sodium/potassium-transporting ATPase subunit gamma (FXYD2) of Bos taurus (Bovine).